Here is a 417-residue protein sequence, read N- to C-terminus: Queuine tRNA-ribosyltransferase accessory subunit 2 (417 aa).

Residues cysteine 324, cysteine 326, cysteine 329, and histidine 355 each contribute to the Zn(2+) site.

The protein belongs to the queuine tRNA-ribosyltransferase family. QTRT2 subfamily. In terms of assembly, heterodimer of a catalytic subunit and an accessory subunit. Requires Zn(2+) as cofactor.

The protein resides in the cytoplasm. In terms of biological role, non-catalytic subunit of the queuine tRNA-ribosyltransferase (TGT) that catalyzes the base-exchange of a guanine (G) residue with queuine (Q) at position 34 (anticodon wobble position) in tRNAs with GU(N) anticodons (tRNA-Asp, -Asn, -His and -Tyr), resulting in the hypermodified nucleoside queuosine (7-(((4,5-cis-dihydroxy-2-cyclopenten-1-yl)amino)methyl)-7-deazaguanosine). In Drosophila virilis (Fruit fly), this protein is Queuine tRNA-ribosyltransferase accessory subunit 2.